The sequence spans 238 residues: MTEEVILKVGLTPKHQCSYLGHEQEQLLVLMDHNLLNASGYERLLTAGFRRSGNDIYRPHCPACSACQSLRIHSERFVPSRSQKRIRQLNQDLELVLSYDDKPEYYQLYERYIRERHHDGSMYPPSRTQYKGFLHCDWMPPLYLEMRKDNRLIGVATTDLLPHSLSAMYTFFDPAHADRSLGTFAILSQLDLAKRTGRTWLYLGYLVEACRKMNYKRQYLPHERLIQGEWKNIDTKPE.

This sequence belongs to the R-transferase family. Bpt subfamily.

It is found in the cytoplasm. The enzyme catalyses N-terminal L-glutamyl-[protein] + L-leucyl-tRNA(Leu) = N-terminal L-leucyl-L-glutamyl-[protein] + tRNA(Leu) + H(+). It carries out the reaction N-terminal L-aspartyl-[protein] + L-leucyl-tRNA(Leu) = N-terminal L-leucyl-L-aspartyl-[protein] + tRNA(Leu) + H(+). In terms of biological role, functions in the N-end rule pathway of protein degradation where it conjugates Leu from its aminoacyl-tRNA to the N-termini of proteins containing an N-terminal aspartate or glutamate. The protein is Aspartate/glutamate leucyltransferase of Aeromonas salmonicida (strain A449).